Reading from the N-terminus, the 208-residue chain is Protein-L-isoaspartate O-methyltransferase (208 aa).

Residue Ser-59 is part of the active site.

Belongs to the methyltransferase superfamily. L-isoaspartyl/D-aspartyl protein methyltransferase family.

The protein localises to the cytoplasm. It catalyses the reaction [protein]-L-isoaspartate + S-adenosyl-L-methionine = [protein]-L-isoaspartate alpha-methyl ester + S-adenosyl-L-homocysteine. In terms of biological role, catalyzes the methyl esterification of L-isoaspartyl residues in peptides and proteins that result from spontaneous decomposition of normal L-aspartyl and L-asparaginyl residues. It plays a role in the repair and/or degradation of damaged proteins. The polypeptide is Protein-L-isoaspartate O-methyltransferase (Vibrio cholerae serotype O1 (strain ATCC 39541 / Classical Ogawa 395 / O395)).